The primary structure comprises 263 residues: Linear gramicidin dehydrogenase LgrE (263 aa).

The active site involves Ser96.

The protein belongs to the thioesterase family.

Functionally, in the final step of gramicidin biosynthesis, reduces the pentadecapeptide-aldehyde intermediate, that is released from the terminal module of the non-ribosomal peptide synthetase LgrD, to the final product ethanolamine-containing gramicidin. This chain is Linear gramicidin dehydrogenase LgrE (lgrE), found in Brevibacillus parabrevis.